We begin with the raw amino-acid sequence, 130 residues long: Small ribosomal subunit protein uS9 (130 aa).

The protein belongs to the universal ribosomal protein uS9 family.

The protein is Small ribosomal subunit protein uS9 of Methylococcus capsulatus (strain ATCC 33009 / NCIMB 11132 / Bath).